The sequence spans 488 residues: Annexin A7 (488 aa).

Positions 1-18 are enriched in pro residues; it reads MSYPGYPPTGYPPFPGYP. Disordered regions lie at residues 1-49 and 71-143; these read MSYP…YPQV and GYPG…PTYP. Positions 1-143 are repeat-rich region; it reads MSYPGYPPTG…QYPGGQPTYP (143 aa). A 3 X 5 AA tandem repeats of G-Y-P-P-X region spans residues 5–20; that stretch reads GYPPTGYPPFPGYPPA. Positions 89-102 are enriched in gly residues; the sequence is PGQGFGVPPGGAGF. Annexin repeat units follow at residues 185–256, 257–328, 340–412, and 416–487; these read FDAI…ALFM, PPTY…SMCQ, QMAQ…TILQ, and NRPA…AIVG. Lys-233 carries the post-translational modification N6-acetyllysine.

This sequence belongs to the annexin family. As to quaternary structure, interacts with PDCD6. In terms of tissue distribution, isoform 1 is expressed in brain, heart and skeletal muscle. Isoform 2 is more abundant in liver, lung, kidney, spleen, fibroblasts and placenta.

Its function is as follows. Calcium/phospholipid-binding protein which promotes membrane fusion and is involved in exocytosis. The polypeptide is Annexin A7 (ANXA7) (Homo sapiens (Human)).